A 186-amino-acid chain; its full sequence is Tumor necrosis factor, alpha-induced protein 8-like protein 2 A (186 aa).

Belongs to the TNFAIP8 family. TNFAIP8L2 subfamily.

Its function is as follows. Acts as a negative regulator of innate and adaptive immunity by maintaining immune homeostasis. Negative regulator of Toll-like receptor and T-cell receptor function. Prevents hyperresponsiveness of the immune system and maintains immune homeostasis. Inhibits jun/ap1 and NF-kappa-B activation. Promotes Fas-induced apoptosis. This is Tumor necrosis factor, alpha-induced protein 8-like protein 2 A (tnfaip8l2a) from Danio rerio (Zebrafish).